We begin with the raw amino-acid sequence, 1046 residues long: MAGKARVHELAKELGVDSKTVLAKLKDLGEFVKSASSTVEAPVVRKLKEAFPAEGSAPSSRPGGRPGNGARPMPPPRPGPAIGRPGPGSGTGPRPGPGGRPVPGRPGPAPLPGASRPSTPTAAPQSQPAQTQPPQSQPVAPQPSQAPRPAAAAASAAAPAPAPSAPAPAPSAPAPAPITSAPTAATPPAAPQRPTPGGPRPGPAAPGRPRTGGPGGPGGPGGGPRPGPRPGPRPAAPGNNPYTSPAAGPRAASGQGGSPSAPPRPGAPRPGGPRPGGPRPGGPGGQRPSPGQMPPRPGGSGGPRPTPGQMPPRPGGSGGPRPNSNMFQPRPAGGAPGRPGGGGGPGRPGGGGGGPRPGGGGFAPRGGAPGRPGGGGGAPGRPGGGGPGGGGRPAAGGRGRGGTTAGAFGPGGRGRPGRQRKSKRAKRQEWESGLEAPRMGAMVPRGNGQAIRLPRGASLADFADKIDANPGALVQVVFTQLGEMVTATQSCTDETLQLLGVTLGYEVQIVSPEDEDKELLESFDLSFGGDYADDVELSARPPVVTVMGHVDHGKTKLLDAIRSTDVVGGEAGGITQHIGAYQVRAVVDGTERPITFIDTPGHETFTAMRARGAQVTDIVVLVVAADDGVKPQTIEALNHAQAANVPIVVAVNKVDKEGADPAKVRGQLTEYGLVAEEYGGDTMFVDVSARNRTGIDELTEAVILTADASLDLRAPTGTEAQGVAIEGRLDRGRGPVATVLVQRGTLRIGDSVVAGEAFGRVRAMLDENGAQVSEAGPARPVQVLGFTSVPDAGDNFLVVPEDRVARQIAERRQARERNAELALSRGRPTLETILERMKEGEKTQLNLILKGDVSGSVEALEDALLKIDVGDEVGLRIIDRGVGAITETNVMLASASDAVIIGFNVRPQGKATELADREGVEVRYYSVIYQAIEDIENALKGMLKPVYEEAQLGTAEVREVFRVPRVGNVAGSLVRSGIIRRNTKARLIRDGVVVADNLTVESLKRFKDDATEVREGYECGIGLGSFNDIKVDDVIETFEQREVPRT.

Residues 49–448 (EAFPAEGSAP…MGAMVPRGNG (400 aa)) form a disordered region. The span at 52 to 71 (PAEGSAPSSRPGGRPGNGAR) shows a compositional bias: low complexity. Residues 94–111 (RPGPGGRPVPGRPGPAPL) show a composition bias toward pro residues. Low complexity-rich tracts occupy residues 112–139 (PGASRPSTPTAAPQSQPAQTQPPQSQPV) and 147–159 (PRPAAAAASAAAP). Positions 160 to 176 (APAPSAPAPAPSAPAPA) are enriched in pro residues. Over residues 177 to 187 (PITSAPTAATP) the composition is skewed to low complexity. The segment covering 188-206 (PAAPQRPTPGGPRPGPAAP) has biased composition (pro residues). Positions 210–222 (RTGGPGGPGGPGG) are enriched in gly residues. Positions 223–235 (GPRPGPRPGPRPA) are enriched in pro residues. Residues 244 to 253 (SPAAGPRAAS) are compositionally biased toward low complexity. Pro residues-rich tracts occupy residues 260 to 281 (SAPPRPGAPRPGGPRPGGPRPG) and 304 to 314 (RPTPGQMPPRP). A compositionally biased stretch (low complexity) spans 320 to 333 (PRPNSNMFQPRPAG). A compositionally biased stretch (gly residues) spans 334-414 (GAPGRPGGGG…AGAFGPGGRG (81 aa)). Positions 415–426 (RPGRQRKSKRAK) are enriched in basic residues. The tr-type G domain maps to 539 to 711 (ARPPVVTVMG…VILTADASLD (173 aa)). The tract at residues 548–555 (GHVDHGKT) is G1. 548–555 (GHVDHGKT) contacts GTP. The segment at 573-577 (GITQH) is G2. A G3 region spans residues 598 to 601 (DTPG). GTP is bound by residues 598 to 602 (DTPGH) and 652 to 655 (NKVD). Residues 652–655 (NKVD) are G4. Residues 688–690 (SAR) form a G5 region.

It belongs to the TRAFAC class translation factor GTPase superfamily. Classic translation factor GTPase family. IF-2 subfamily.

The protein resides in the cytoplasm. Functionally, one of the essential components for the initiation of protein synthesis. Protects formylmethionyl-tRNA from spontaneous hydrolysis and promotes its binding to the 30S ribosomal subunits. Also involved in the hydrolysis of GTP during the formation of the 70S ribosomal complex. The chain is Translation initiation factor IF-2 from Parafrankia sp. (strain EAN1pec).